The primary structure comprises 618 residues: Neurosecretory protein VGF (618 aa).

A signal peptide spans 1-23 (MKSLRLPATVLFCLLLLIKGLGA). Disordered regions lie at residues 23-46 (AAPP…PVAG), 86-201 (VLLQ…LESP), and 219-262 (PERA…GEAL). Pro residues predominate over residues 26–37 (PGHPEAQPPPPS). Positions 180–195 (ETAAAETETRTHTLTR) are enriched in low complexity. Residues 301–332 (LAQVEAGRRQAEATRQAAAQEERLADLASDLL) adopt a coiled-coil conformation. Residue glutamine 310 is modified to Pyrrolidone carboxylic acid. The tract at residues 342–603 (RQRGLGGRGL…EAEERRLQEQ (262 aa)) is disordered. Over residues 356 to 378 (GGGRETARQQEEAEQERRGGEER) the composition is skewed to basic and acidic residues. Acidic residues predominate over residues 379–395 (VGEEDEEAAEAEAEAEE). The segment covering 416-434 (AEDKRSREETPGHRRKEAE) has biased composition (basic and acidic residues). A Phosphoserine modification is found at serine 421. At threonine 425 the chain carries Phosphothreonine. A compositionally biased stretch (acidic residues) spans 435 to 451 (GAEEGGAEDEDDDEEMD). Pro residues predominate over residues 490–500 (PPEPVPPPRAA). A compositionally biased stretch (basic and acidic residues) spans 578 to 602 (HYPDREAQARRAQEEAEAEERRLQE).

Post-translationally, multiple peptides are derived from VGF, with activities in synaptic plasticity, antidepression, penile erection, autonomic activation, and increases in energy expenditure.

Its subcellular location is the secreted. The protein localises to the cytoplasmic vesicle. It is found in the secretory vesicle. Its function is as follows. Secreted polyprotein that is packaged and proteolytically processed by prohormone convertases PCSK1 and PCSK2 in a cell-type-specific manner. VGF and peptides derived from its processing play many roles in neurogenesis and neuroplasticity associated with learning, memory, depression and chronic pain. In terms of biological role, plays a role in the control of body fluid homeostasis by regulating vasopressin release. Suppresses presynaptic glutamatergic neurons connected to vasopressin neurons. Functionally, plays a role in the control of body fluid homeostasis by regulating vasopressin release. Activates GABAergic interneurons which are inhibitory neurons of the nervous system and thereby suppresses presynaptic glutamatergic neurons. Also stimulates feeding behavior in an orexin-dependent manner in the hypothalamus. Functions as a positive regulator for the activation of orexin neurons resulting in elevated gastric acid secretion and gastric emptying. This chain is Neurosecretory protein VGF, found in Bos taurus (Bovine).